The sequence spans 277 residues: 2-dehydro-3-deoxyphosphooctonate aldolase (277 aa).

It belongs to the KdsA family.

It is found in the cytoplasm. It catalyses the reaction D-arabinose 5-phosphate + phosphoenolpyruvate + H2O = 3-deoxy-alpha-D-manno-2-octulosonate-8-phosphate + phosphate. It participates in carbohydrate biosynthesis; 3-deoxy-D-manno-octulosonate biosynthesis; 3-deoxy-D-manno-octulosonate from D-ribulose 5-phosphate: step 2/3. The protein operates within bacterial outer membrane biogenesis; lipopolysaccharide biosynthesis. The chain is 2-dehydro-3-deoxyphosphooctonate aldolase from Alkalilimnicola ehrlichii (strain ATCC BAA-1101 / DSM 17681 / MLHE-1).